Here is a 368-residue protein sequence, read N- to C-terminus: Germination protease (368 aa).

A propeptide spanning residues Met1–Asp15 is cleaved from the precursor.

It belongs to the peptidase A25 family. Homotetramer. Autoproteolytically processed. The inactive tetrameric zymogen termed p46 autoprocesses to a smaller form termed p41, which is active only during spore germination.

The enzyme catalyses Endopeptidase action with P4 Glu or Asp, P1 preferably Glu &gt; Asp, P1' hydrophobic and P2' Ala.. Functionally, initiates the rapid degradation of small, acid-soluble proteins during spore germination. The protein is Germination protease of Bacillus anthracis (strain A0248).